Reading from the N-terminus, the 479-residue chain is GTPase Der (479 aa).

2 consecutive EngA-type G domains span residues 3–167 and 208–383; these read FKVA…GEAR and MRIA…KVWN. GTP-binding positions include 9–16, 56–60, 119–122, 214–221, 261–265, and 326–329; these read GRPNVGKS, DTAGF, NKAE, GRPNAGKS, DTAGM, and NKWD. The KH-like domain occupies 384–468; sequence SRVSTGKLNR…PIRIALRTSD (85 aa).

It belongs to the TRAFAC class TrmE-Era-EngA-EngB-Septin-like GTPase superfamily. EngA (Der) GTPase family. In terms of assembly, associates with the 50S ribosomal subunit.

Its function is as follows. GTPase that plays an essential role in the late steps of ribosome biogenesis. The polypeptide is GTPase Der (Mesorhizobium japonicum (strain LMG 29417 / CECT 9101 / MAFF 303099) (Mesorhizobium loti (strain MAFF 303099))).